We begin with the raw amino-acid sequence, 485 residues long: MSQVNRRKVLFVTSELADLVKTGGLGDVSAALPRAMRHLHDVRVLIPGYPQVINSGNPIHIISQLGGHAALPPCKVGRMDMKDGLVIYVLICPELYEREGTPYADSNGRDWSDNHIRFARLGLAAAEFAAGEVKSQWCPELVHAHDWPAGLAPAYMRWRGQSTPSIFTVHNLAYQGTVSTASSRELGIPDSAITPEGMEFYGQLSFIKAGMAFASHITTVSATYAREITTPEFGCGLEGFLQSKANKGQLSGIPNGIDESWDAATDEHLICHFAPNEWTRKEINADYVRELFELDASTGPLFAVVSRLVYQKGLDLTIGVAEHIVNNGGQIAIIGRGEPEEEEAMRELAARFPGRVGVRIGFNETDARRMFAGSDFLLMPSRYEPCGLSQMYAQRFGSLPVARNTGGLADTIEDGVTGFLFNESTVESYTQALDRAFQVFAHPELLNAMRCRAMAAPFNWHQAVEPYADLYRDLLKKNVSVSSNY.

Residue K21 coordinates ADP-alpha-D-glucose.

This sequence belongs to the glycosyltransferase 1 family. Bacterial/plant glycogen synthase subfamily.

It carries out the reaction [(1-&gt;4)-alpha-D-glucosyl](n) + ADP-alpha-D-glucose = [(1-&gt;4)-alpha-D-glucosyl](n+1) + ADP + H(+). The protein operates within glycan biosynthesis; glycogen biosynthesis. Its function is as follows. Synthesizes alpha-1,4-glucan chains using ADP-glucose. The sequence is that of Glycogen synthase from Pseudomonas syringae pv. syringae (strain B728a).